Consider the following 354-residue polypeptide: Photosystem II protein D1 2 (354 aa).

Transmembrane regions (helical) follow at residues Tyr-29–Thr-46, His-118–Leu-133, and Trp-142–Ala-156. Residue His-118 coordinates chlorophyll a. Tyr-126 provides a ligand contact to pheophytin a. 2 residues coordinate [CaMn4O5] cluster: Asp-170 and Glu-189. The helical transmembrane segment at Phe-197–Leu-218 threads the bilayer. His-198 provides a ligand contact to chlorophyll a. A quinone contacts are provided by residues His-215 and Ser-264–Phe-265. A Fe cation-binding site is contributed by His-215. Residue His-272 coordinates Fe cation. A helical transmembrane segment spans residues Phe-274–Leu-288. [CaMn4O5] cluster-binding residues include His-332, Glu-333, Asp-342, and Ala-344. A propeptide spanning residues Ala-345–Gly-354 is cleaved from the precursor.

This sequence belongs to the reaction center PufL/M/PsbA/D family. PSII is composed of 1 copy each of membrane proteins PsbA, PsbB, PsbC, PsbD, PsbE, PsbF, PsbH, PsbI, PsbJ, PsbK, PsbL, PsbM, PsbT, PsbX, PsbY, PsbZ, Psb30/Ycf12, peripheral proteins PsbO, CyanoQ (PsbQ), PsbU, PsbV and a large number of cofactors. It forms dimeric complexes. It depends on The D1/D2 heterodimer binds P680, chlorophylls that are the primary electron donor of PSII, and subsequent electron acceptors. It shares a non-heme iron and each subunit binds pheophytin, quinone, additional chlorophylls, carotenoids and lipids. D1 provides most of the ligands for the Mn4-Ca-O5 cluster of the oxygen-evolving complex (OEC). There is also a Cl(-1) ion associated with D1 and D2, which is required for oxygen evolution. The PSII complex binds additional chlorophylls, carotenoids and specific lipids. as a cofactor. Post-translationally, tyr-161 forms a radical intermediate that is referred to as redox-active TyrZ, YZ or Y-Z. C-terminally processed by CtpA; processing is essential to allow assembly of the oxygen-evolving complex and thus photosynthetic growth.

The protein localises to the cellular thylakoid membrane. The catalysed reaction is 2 a plastoquinone + 4 hnu + 2 H2O = 2 a plastoquinol + O2. Its function is as follows. Photosystem II (PSII) is a light-driven water:plastoquinone oxidoreductase that uses light energy to abstract electrons from H(2)O, generating O(2) and a proton gradient subsequently used for ATP formation. It consists of a core antenna complex that captures photons, and an electron transfer chain that converts photonic excitation into a charge separation. The D1/D2 (PsbA/PsbD) reaction center heterodimer binds P680, the primary electron donor of PSII as well as several subsequent electron acceptors. In Synechococcus sp. (strain JA-2-3B'a(2-13)) (Cyanobacteria bacterium Yellowstone B-Prime), this protein is Photosystem II protein D1 2.